The sequence spans 265 residues: Flap endonuclease Xni (265 aa).

Aspartate 111 provides a ligand contact to Mg(2+). The region spanning 167-260 (VVPAQLVDFW…NLREIRYPPA (94 aa)) is the 5'-3' exonuclease domain. Positions 178, 189, and 192 each coordinate K(+). Positions 191–196 (GIGPKT) are interaction with DNA.

This sequence belongs to the Xni family. Requires Mg(2+) as cofactor. The cofactor is K(+).

Its function is as follows. Has flap endonuclease activity. During DNA replication, flap endonucleases cleave the 5'-overhanging flap structure that is generated by displacement synthesis when DNA polymerase encounters the 5'-end of a downstream Okazaki fragment. The protein is Flap endonuclease Xni of Aeromonas salmonicida (strain A449).